The chain runs to 960 residues: Glycine dehydrogenase (decarboxylating) (960 aa).

Lys-709 is subject to N6-(pyridoxal phosphate)lysine.

It belongs to the GcvP family. In terms of assembly, the glycine cleavage system is composed of four proteins: P, T, L and H. The cofactor is pyridoxal 5'-phosphate.

It catalyses the reaction N(6)-[(R)-lipoyl]-L-lysyl-[glycine-cleavage complex H protein] + glycine + H(+) = N(6)-[(R)-S(8)-aminomethyldihydrolipoyl]-L-lysyl-[glycine-cleavage complex H protein] + CO2. Its function is as follows. The glycine cleavage system catalyzes the degradation of glycine. The P protein binds the alpha-amino group of glycine through its pyridoxal phosphate cofactor; CO(2) is released and the remaining methylamine moiety is then transferred to the lipoamide cofactor of the H protein. In Hahella chejuensis (strain KCTC 2396), this protein is Glycine dehydrogenase (decarboxylating).